Reading from the N-terminus, the 204-residue chain is Cytochrome bo(3) ubiquinol oxidase subunit 3 (204 aa).

Residues 1–31 (MATDTLTHATAHAHEHGHHDAGGTKIFGFWI) lie on the Cytoplasmic side of the membrane. Residues 32 to 50 (YLMSDCILFSILFATYAVL) traverse the membrane as a helical segment. At 51–66 (VNGTAGGPTGKDIFEL) the chain is on the periplasmic side. A helical transmembrane segment spans residues 67–85 (PFVLVETFLLLFSSITYGM). Over 86-101 (AAIAMYKNNKSQVISW) the chain is Cytoplasmic. Residues 102-120 (LALTWLFGAGFIGMEIYEF) traverse the membrane as a helical segment. The Periplasmic portion of the chain corresponds to 121–142 (HHLIVNGMGPDRSGFLSAFFAL). The chain crosses the membrane as a helical span at residues 143-161 (VGTHGLHVTSGLIWMAVLM). Over 162-184 (VQIARRGLTSTNRTRIMCLSLFW) the chain is Cytoplasmic. Residues 185–203 (HFLDVVWICVFTVVYLMGA) form a helical membrane-spanning segment. Residue Met-204 is a topological domain, periplasmic.

The protein belongs to the cytochrome c oxidase subunit 3 family. As to quaternary structure, heterooctamer of two A chains, two B chains, two C chains and two D chains.

It localises to the cell inner membrane. In terms of biological role, cytochrome bo(3) ubiquinol terminal oxidase is the component of the aerobic respiratory chain of E.coli that predominates when cells are grown at high aeration. Has proton pump activity across the membrane in addition to electron transfer, pumping 2 protons/electron. The protein is Cytochrome bo(3) ubiquinol oxidase subunit 3 (cyoC) of Escherichia coli O6:H1 (strain CFT073 / ATCC 700928 / UPEC).